Here is a 72-residue protein sequence, read N- to C-terminus: Sec-independent protein translocase protein TatA (72 aa).

The chain crosses the membrane as a helical span at residues 1-21 (MLGGISIWQLLIVLAILVLIF).

The protein belongs to the TatA/E family. The Tat system comprises two distinct complexes: a TatABC complex, containing multiple copies of TatA, TatB and TatC subunits, and a separate TatA complex, containing only TatA subunits. Substrates initially bind to the TatABC complex, which probably triggers association of the separate TatA complex to form the active translocon.

It localises to the cell inner membrane. Part of the twin-arginine translocation (Tat) system that transports large folded proteins containing a characteristic twin-arginine motif in their signal peptide across membranes. TatA could form the protein-conducting channel of the Tat system. The polypeptide is Sec-independent protein translocase protein TatA (Marinomonas sp. (strain MWYL1)).